Reading from the N-terminus, the 476-residue chain is MANSAKAEEYEKMSLEQAKASVNSETESSFNINENTTASGTGLSEKTSVCRQVDIARKRKEFEDDLVKESSSCGKDTPSKKRKLDPEIVPEEKDCGDAEGNSKKRKRETEDVPKDKSSTGDGTQNKRKIALEDVPEKQKNLEEGHSSTVAAHYNELQEVGLEKRSQSRIFYLRNFNNWMKSVLIGEFLEKVRQKKKRDITVLDLGCGKGGDLLKWKKGRINKLVCTDIADVSVKQCQQRYEDMKNRRDSEYIFSAEFITADSSKELLIDKFRDPQMCFDICSCQFVCHYSFESYEQADMMLRNACERLSPGGYFIGTTPNSFELIRRLEASETESFGNEIYTVKFQKKGDYPLFGCKYDFNLEGVVDVPEFLVYFPLLNEMAKKYNMKLVYKKTFLEFYEEKIKNNENKMLLKRMQALEPYPANESSKLVSEKVDDYEHAAKYMKNSQVRLPLGTLSKSEWEATSIYLVFAFEKQQ.

Residues 1–14 show a composition bias toward basic and acidic residues; sequence MANSAKAEEYEKMS. The segment at 1–146 is disordered; the sequence is MANSAKAEEY…KQKNLEEGHS (146 aa). The segment covering 20-50 has biased composition (polar residues); that stretch reads ASVNSETESSFNINENTTASGTGLSEKTSVC. 3 positions are modified to phosphoserine: serine 24, serine 28, and serine 29. Composition is skewed to basic and acidic residues over residues 54–68 and 84–118; these read DIAR…DLVK and LDPE…DKSS. Serine 118 carries the post-translational modification Phosphoserine. A Nuclear localization signal motif is present at residues 126–128; it reads KRK. Residues 129–145 are compositionally biased toward basic and acidic residues; it reads IALEDVPEKQKNLEEGH. Positions 167–475 constitute an mRNA cap 0 methyltransferase domain; sequence SRIFYLRNFN…IYLVFAFEKQ (309 aa). Position 176–177 (176–177) interacts with mRNA; that stretch reads NN. The S-adenosyl-L-methionine site is built by lysine 180, glycine 205, aspartate 227, aspartate 261, glutamine 284, and tyrosine 289.

The protein belongs to the class I-like SAM-binding methyltransferase superfamily. mRNA cap 0 methyltransferase family. Interacts with importin alpha, leading to stimulate both RNA-binding and methyltransferase activity. Interaction with importin alpha and beta is required for its nuclear localization, importin beta dissociating in response to RanGTP, allowing RNMT-importin alpha to bind RNA substrates. Interacts with elongating form of polymerase II and RNGTT. Interacts with RAMAC, this interaction significantly enhances RNA-binding and cap methyltransferase activity. Widely expressed.

It is found in the nucleus. It catalyses the reaction a 5'-end (5'-triphosphoguanosine)-ribonucleoside in mRNA + S-adenosyl-L-methionine = a 5'-end (N(7)-methyl 5'-triphosphoguanosine)-ribonucleoside in mRNA + S-adenosyl-L-homocysteine. Its activity is regulated as follows. Methyltransferase activity is activated by RAMAC. Its function is as follows. Catalytic subunit of the mRNA-capping methyltransferase RNMT:RAMAC complex that methylates the N7 position of the added guanosine to the 5'-cap structure of mRNAs. Binds RNA containing 5'-terminal GpppC. The chain is mRNA cap guanine-N(7) methyltransferase (RNMT) from Homo sapiens (Human).